Reading from the N-terminus, the 516-residue chain is Acetylcholine receptor subunit alpha-like (516 aa).

Positions 1–21 (MRSVTKYYLHGVVLFATGCAG) are cleaved as a signal peptide. At 22-243 (NPDAKRLYDD…ITMRRKTLFY (222 aa)) the chain is on the extracellular side. Residues asparagine 45 and asparagine 132 are each glycosylated (N-linked (GlcNAc...) asparagine). 2 disulfides stabilise this stretch: cysteine 149/cysteine 163 and cysteine 222/cysteine 223. A glycan (N-linked (GlcNAc...) asparagine) is linked at asparagine 233. Helical transmembrane passes span 244–264 (TVNL…VFYL), 274–294 (LSIS…EIIP), and 306–326 (FVLF…VVLN). Residues 327–465 (VHFRSPQTHT…WKYVAMVLDR (139 aa)) lie on the Cytoplasmic side of the membrane. Residues 466-486 (PFLWIFTLAVVVGSAGIILQA) traverse the membrane as a helical segment.

Belongs to the ligand-gated ion channel (TC 1.A.9) family. Acetylcholine receptor (TC 1.A.9.1) subfamily.

It is found in the postsynaptic cell membrane. Its subcellular location is the cell membrane. After binding acetylcholine, the AChR responds by an extensive change in conformation that affects all subunits and leads to opening of an ion-conducting channel across the plasma membrane. The chain is Acetylcholine receptor subunit alpha-like (ARA1) from Manduca sexta (Tobacco hawkmoth).